We begin with the raw amino-acid sequence, 116 residues long: Large ribosomal subunit protein uL22c (116 aa).

The protein belongs to the universal ribosomal protein uL22 family. In terms of assembly, part of the 50S ribosomal subunit.

It localises to the plastid. It is found in the chloroplast. Functionally, this protein binds specifically to 23S rRNA. Its function is as follows. The globular domain of the protein is located near the polypeptide exit tunnel on the outside of the subunit, while an extended beta-hairpin is found that lines the wall of the exit tunnel in the center of the 70S ribosome. This is Large ribosomal subunit protein uL22c (rpl22) from Psilotum nudum (Whisk fern).